A 1131-amino-acid chain; its full sequence is PPi-type phosphoenolpyruvate carboxykinase (1131 aa).

It belongs to the PPi-type phosphoenolpyruvate carboxykinase family. As to quaternary structure, monomer and trimer; forms heterotrimers with PEPCK2 and PEPCK3.

The catalysed reaction is oxaloacetate + diphosphate = phosphoenolpyruvate + phosphate + CO2. Inorganic pyrophosphate (PPi)-dependent phosphoenolpyruvate carboxykinase, which regulates the carbon flow of the central metabolism by fixing CO(2) to phosphoenolpyruvate to produce oxaloacetate. Can also produce pyruvate and diphosphate from phosphoenolpyruvate and phosphate. This chain is PPi-type phosphoenolpyruvate carboxykinase, found in Propionibacterium freudenreichii subsp. freudenreichii.